Reading from the N-terminus, the 240-residue chain is Uridylate kinase (240 aa).

ATP is bound at residue 12-15; that stretch reads KLSG. The tract at residues 20–25 is involved in allosteric activation by GTP; the sequence is GEDGFG. Residue G54 coordinates UMP. ATP is bound by residues G55 and R59. UMP-binding positions include D74 and 135–142; that span reads TGNPYFST. 3 residues coordinate ATP: N163, Y169, and D172.

The protein belongs to the UMP kinase family. Homohexamer.

The protein resides in the cytoplasm. It carries out the reaction UMP + ATP = UDP + ADP. It participates in pyrimidine metabolism; CTP biosynthesis via de novo pathway; UDP from UMP (UMPK route): step 1/1. With respect to regulation, allosterically activated by GTP. Probably inhibited by UTP. Functionally, catalyzes the reversible phosphorylation of UMP to UDP. This is Uridylate kinase (pyrH) from Enterococcus faecalis (strain ATCC 700802 / V583).